We begin with the raw amino-acid sequence, 315 residues long: 4-carboxy-2-hydroxymuconate-6-semialdehyde dehydrogenase (315 aa).

This sequence belongs to the Gfo/Idh/MocA family. Homodimer.

The enzyme catalyses 4-carboxy-2-hydroxymuconate semialdehyde hemiacetal + NADP(+) = 2-oxo-2H-pyran-4,6-dicarboxylate + NADPH + H(+). The protein operates within secondary metabolite metabolism; lignin degradation. Inhibited by p-chloromercuribenzoate (10 mM), HgCl2 (10 mM), or 5,5-dithiobis(2-nitrobenzoate) (100 mM). Its function is as follows. Involved in the degradation of protocatechuate (PCA) via the PCA 4,5-cleavage pathway. Catalyzes the oxidation of the hemiacetal form of 4-carboxy-2-hydroxymuconate-6-semialdehyde (CHMS) to produce 2-pyrone-4,6-dicarboxylate (PDC). LigC has 10-times-higher affinity to NADP than to NAD. The sequence is that of 4-carboxy-2-hydroxymuconate-6-semialdehyde dehydrogenase (ligC) from Sphingobium sp. (strain NBRC 103272 / SYK-6).